A 156-amino-acid polypeptide reads, in one-letter code: Small ribosomal subunit protein uS7 (156 aa).

Belongs to the universal ribosomal protein uS7 family. In terms of assembly, part of the 30S ribosomal subunit. Contacts proteins S9 and S11.

One of the primary rRNA binding proteins, it binds directly to 16S rRNA where it nucleates assembly of the head domain of the 30S subunit. Is located at the subunit interface close to the decoding center, probably blocks exit of the E-site tRNA. The chain is Small ribosomal subunit protein uS7 from Idiomarina loihiensis (strain ATCC BAA-735 / DSM 15497 / L2-TR).